A 366-amino-acid chain; its full sequence is Mitogen-activated protein kinase 13 (366 aa).

Residues 25–308 (YVSLTHIGSG…ASQALAHPFF (284 aa)) form the Protein kinase domain. 31–39 (IGSGAYGSV) is a binding site for ATP. Phosphoserine is present on S47. Residue K54 participates in ATP binding. D150 serves as the catalytic Proton acceptor. Position 180 is a phosphothreonine; by MAP2K3, MAP2K4, MAP2K6 and MAP2K7 (T180). The short motif at 180–182 (TGY) is the TXY element. Position 182 is a phosphotyrosine; by MAP2K3, MAP2K4, MAP2K6 and MAP2K7 (Y182). A Phosphoserine modification is found at S350.

Belongs to the protein kinase superfamily. CMGC Ser/Thr protein kinase family. MAP kinase subfamily. In terms of assembly, interacts with MAPK8IP2. Mg(2+) is required as a cofactor. Dually phosphorylated on Thr-180 and Tyr-182 by MAP2K3/MKK3, MAP2K4/MKK4, MAP2K6/MKK6 and MAP2K7/MKK7, which activates the enzyme. Dephosphorylated by dual specificity phosphatase DUSP1.

The catalysed reaction is L-seryl-[protein] + ATP = O-phospho-L-seryl-[protein] + ADP + H(+). It carries out the reaction L-threonyl-[protein] + ATP = O-phospho-L-threonyl-[protein] + ADP + H(+). With respect to regulation, activated by phosphorylation on threonine and tyrosine by dual specificity kinases, MAP2K3/MKK3 MAP2K6/MKK6, MAP2K4/MKK4 and MAP2K7/MKK7. Activation by ultraviolet radiation, hyperosmotic shock, anisomycin or by TNF-alpha is mediated by MAP2K3/MKK3. Inhibited by dual specificity phosphatase DUSP1. Serine/threonine kinase which acts as an essential component of the MAP kinase signal transduction pathway. MAPK13 is one of the four p38 MAPKs which play an important role in the cascades of cellular responses evoked by extracellular stimuli such as pro-inflammatory cytokines or physical stress leading to direct activation of transcription factors such as ELK1 and ATF2. Accordingly, p38 MAPKs phosphorylate a broad range of proteins and it has been estimated that they may have approximately 200 to 300 substrates each. MAPK13 is one of the less studied p38 MAPK isoforms. Some of the targets are downstream kinases such as MAPKAPK2, which are activated through phosphorylation and further phosphorylate additional targets. Plays a role in the regulation of protein translation by phosphorylating and inactivating EEF2K. Involved in cytoskeletal remodeling through phosphorylation of MAPT and STMN1. Mediates UV irradiation induced up-regulation of the gene expression of CXCL14. Plays an important role in the regulation of epidermal keratinocyte differentiation, apoptosis and skin tumor development. Phosphorylates the transcriptional activator MYB in response to stress which leads to rapid MYB degradation via a proteasome-dependent pathway. MAPK13 also phosphorylates and down-regulates PRKD1 during regulation of insulin secretion in pancreatic beta cells. The protein is Mitogen-activated protein kinase 13 (MAPK13) of Bos taurus (Bovine).